We begin with the raw amino-acid sequence, 198 residues long: Neutrophil gelatinase-associated lipocalin (198 aa).

The N-terminal stretch at 1 to 20 is a signal peptide; the sequence is MGLGVLCLALVLLGVLQSQA. Pyrrolidone carboxylic acid is present on Gln-21. An a carboxymycobactin-binding site is contributed by 72-74; sequence YST. The N-linked (GlcNAc...) asparagine glycan is linked to Asn-85. A disulfide bond links Cys-96 and Cys-195. Tyr-126 contacts enterobactin. A carboxymycobactin-binding residues include Lys-145, Lys-154, and Tyr-158. Enterobactin is bound at residue Lys-154.

Belongs to the calycin superfamily. Lipocalin family. Monomer. Homodimer; disulfide-linked. Heterodimer; disulfide-linked with MMP9. Detected in the ureteric bud in embryonic kidney (at protein level).

It is found in the secreted. The protein localises to the cytoplasmic granule lumen. Its subcellular location is the cytoplasmic vesicle lumen. Iron-trafficking protein involved in multiple processes such as apoptosis, innate immunity and renal development. Binds iron through association with 2,3-dihydroxybenzoic acid (2,3-DHBA), a siderophore that shares structural similarities with bacterial enterobactin, and delivers or removes iron from the cell, depending on the context. Iron-bound form (holo-24p3) is internalized following binding to the SLC22A17 (24p3R) receptor, leading to release of iron and subsequent increase of intracellular iron concentration. In contrast, association of the iron-free form (apo-24p3) with the SLC22A17 (24p3R) receptor is followed by association with an intracellular siderophore, iron chelation and iron transfer to the extracellular medium, thereby reducing intracellular iron concentration. Involved in apoptosis due to interleukin-3 (IL3) deprivation: iron-loaded form increases intracellular iron concentration without promoting apoptosis, while iron-free form decreases intracellular iron levels, inducing expression of the proapoptotic protein BCL2L11/BIM, resulting in apoptosis. Involved in innate immunity; limits bacterial proliferation by sequestering iron bound to microbial siderophores, such as enterobactin. Can also bind siderophores from M.tuberculosis. This Rattus norvegicus (Rat) protein is Neutrophil gelatinase-associated lipocalin (Lcn2).